An 831-amino-acid chain; its full sequence is Periplasmic nitrate reductase (831 aa).

A signal peptide (tat-type signal) is located at residues 1–35; the sequence is MTISDSRRTFLKASAAAATASAAGIPLANGTAAEA. In terms of domain architecture, 4Fe-4S Mo/W bis-MGD-type spans 42–98; that stretch reads IRWDKAACRFCGTGCSVLVGTKEGRVVATQGDPDAPVNRGLNCIKGYFLSKIMYGED. Positions 49, 52, 56, and 84 each coordinate [4Fe-4S] cluster. Residues lysine 86, glutamine 153, asparagine 178, cysteine 182, 215–222, 246–250, 265–267, methionine 375, glutamine 379, asparagine 485, 511–512, lysine 534, aspartate 561, and 721–730 each bind Mo-bis(molybdopterin guanine dinucleotide); these read WGSNMAEM, STYEH, QTD, SD, and TGRVLEHWHS. Tryptophan 797 serves as a coordination point for substrate. Mo-bis(molybdopterin guanine dinucleotide)-binding residues include asparagine 805 and lysine 822.

It belongs to the prokaryotic molybdopterin-containing oxidoreductase family. NasA/NapA/NarB subfamily. Component of the periplasmic nitrate reductase NapAB complex composed of NapA and NapB. Requires [4Fe-4S] cluster as cofactor. Mo-bis(molybdopterin guanine dinucleotide) serves as cofactor. Post-translationally, predicted to be exported by the Tat system. The position of the signal peptide cleavage has not been experimentally proven.

Its subcellular location is the periplasm. It catalyses the reaction 2 Fe(II)-[cytochrome] + nitrate + 2 H(+) = 2 Fe(III)-[cytochrome] + nitrite + H2O. Functionally, catalytic subunit of the periplasmic nitrate reductase complex NapAB. Receives electrons from NapB and catalyzes the reduction of nitrate to nitrite. This chain is Periplasmic nitrate reductase, found in Dinoroseobacter shibae (strain DSM 16493 / NCIMB 14021 / DFL 12).